The following is a 251-amino-acid chain: ATP synthase subunit a (251 aa).

5 helical membrane-spanning segments follow: residues 14–34 (GFVKLNGTIIYTWLLMLLLAV), 78–98 (YLPFLGTLFVFVAVANLFAVF), 107–127 (SLSTTVALAICVFVAVPFYGI), 174–194 (MILAIMLIITPFIFPVVMGVL), and 196–216 (LLIGGVQAYIFSILATVYIAA). Residues 224–251 (NAGASDDEGGEDAKSACAAGGKICKHKP) form a disordered region.

Belongs to the ATPase A chain family. F-type ATPases have 2 components, CF(1) - the catalytic core - and CF(0) - the membrane proton channel. CF(1) has five subunits: alpha(3), beta(3), gamma(1), delta(1), epsilon(1). CF(0) has three main subunits: a(1), b(2) and c(9-12). The alpha and beta chains form an alternating ring which encloses part of the gamma chain. CF(1) is attached to CF(0) by a central stalk formed by the gamma and epsilon chains, while a peripheral stalk is formed by the delta and b chains.

The protein localises to the cell inner membrane. Functionally, key component of the proton channel; it plays a direct role in the translocation of protons across the membrane. This is ATP synthase subunit a from Nitrosospira multiformis (strain ATCC 25196 / NCIMB 11849 / C 71).